The chain runs to 509 residues: Kelch repeat protein M-T9 (509 aa).

Residues 15–79 (SDVTVVAGDS…MYAGCDGLND (65 aa)) form the BTB domain. 5 Kelch repeats span residues 274–320 (VLYC…IVNG), 321–368 (YIYV…YRNE), 370–415 (WIVG…VYNN), 416–463 (RLYC…VYNK), and 465–509 (IYVL…NDEI).

The protein belongs to the poxviruses Kelch family.

The protein is Kelch repeat protein M-T9 of Myxoma virus (strain Lausanne) (MYXV).